A 515-amino-acid chain; its full sequence is Putative myristoylated protein 118L (515 aa).

The N-myristoyl glycine; by host moiety is linked to residue Gly2. The next 3 membrane-spanning stretches (helical) occupy residues Leu188 to Val208, Ile214 to Thr234, and Trp482 to Ser502.

This sequence belongs to the IIV-6 118L/458R family.

The protein resides in the membrane. This is Putative myristoylated protein 118L from Acheta domesticus (House cricket).